The chain runs to 339 residues: Quinolinate synthase (339 aa).

Residues H63 and S81 each contribute to the iminosuccinate site. Position 126 (C126) interacts with [4Fe-4S] cluster. Iminosuccinate contacts are provided by residues 152–154 (YVN) and S169. C211 provides a ligand contact to [4Fe-4S] cluster. Iminosuccinate contacts are provided by residues 237-239 (HPE) and T254. C297 is a [4Fe-4S] cluster binding site.

This sequence belongs to the quinolinate synthase family. Type 2 subfamily. It depends on [4Fe-4S] cluster as a cofactor.

It localises to the cytoplasm. The catalysed reaction is iminosuccinate + dihydroxyacetone phosphate = quinolinate + phosphate + 2 H2O + H(+). Its pathway is cofactor biosynthesis; NAD(+) biosynthesis; quinolinate from iminoaspartate: step 1/1. In terms of biological role, catalyzes the condensation of iminoaspartate with dihydroxyacetone phosphate to form quinolinate. In Xylella fastidiosa (strain Temecula1 / ATCC 700964), this protein is Quinolinate synthase.